The following is a 159-amino-acid chain: Ribosome maturation factor RimP (159 aa).

The protein belongs to the RimP family.

It is found in the cytoplasm. In terms of biological role, required for maturation of 30S ribosomal subunits. In Streptococcus pneumoniae (strain 70585), this protein is Ribosome maturation factor RimP.